Consider the following 465-residue polypeptide: Ribulose bisphosphate carboxylase large chain (465 aa).

N6,N6,N6-trimethyllysine is present on Lys-4. Substrate-binding residues include Asn-113 and Thr-163. Catalysis depends on Lys-165, which acts as the Proton acceptor. Position 167 (Lys-167) interacts with substrate. Mg(2+) is bound by residues Lys-191, Asp-193, and Glu-194. Lys-191 is modified (N6-carboxylysine). Residue His-284 is the Proton acceptor of the active site. Substrate is bound by residues Arg-285, His-317, and Ser-369.

This sequence belongs to the RuBisCO large chain family. Type I subfamily. As to quaternary structure, heterohexadecamer of 8 large chains and 8 small chains; disulfide-linked. The disulfide link is formed within the large subunit homodimers. Requires Mg(2+) as cofactor. Post-translationally, the disulfide bond which can form in the large chain dimeric partners within the hexadecamer appears to be associated with oxidative stress and protein turnover.

Its subcellular location is the plastid. It localises to the chloroplast. It catalyses the reaction 2 (2R)-3-phosphoglycerate + 2 H(+) = D-ribulose 1,5-bisphosphate + CO2 + H2O. The enzyme catalyses D-ribulose 1,5-bisphosphate + O2 = 2-phosphoglycolate + (2R)-3-phosphoglycerate + 2 H(+). In terms of biological role, ruBisCO catalyzes two reactions: the carboxylation of D-ribulose 1,5-bisphosphate, the primary event in carbon dioxide fixation, as well as the oxidative fragmentation of the pentose substrate in the photorespiration process. Both reactions occur simultaneously and in competition at the same active site. This Clitoria ternatea (Butterfly pea) protein is Ribulose bisphosphate carboxylase large chain.